Reading from the N-terminus, the 414-residue chain is Gamma-glutamyl phosphate reductase (414 aa).

This sequence belongs to the gamma-glutamyl phosphate reductase family.

It is found in the cytoplasm. It carries out the reaction L-glutamate 5-semialdehyde + phosphate + NADP(+) = L-glutamyl 5-phosphate + NADPH + H(+). It participates in amino-acid biosynthesis; L-proline biosynthesis; L-glutamate 5-semialdehyde from L-glutamate: step 2/2. Catalyzes the NADPH-dependent reduction of L-glutamate 5-phosphate into L-glutamate 5-semialdehyde and phosphate. The product spontaneously undergoes cyclization to form 1-pyrroline-5-carboxylate. In Kosmotoga olearia (strain ATCC BAA-1733 / DSM 21960 / TBF 19.5.1), this protein is Gamma-glutamyl phosphate reductase.